Reading from the N-terminus, the 289-residue chain is Diaminopimelate epimerase (289 aa).

Substrate contacts are provided by Asn11 and Asn78. Catalysis depends on Cys87, which acts as the Proton donor. Substrate is bound by residues 88-89 (GN), Asn163, Asn199, and 217-218 (ER). The active-site Proton acceptor is Cys226. Residue 227-228 (GT) coordinates substrate.

Belongs to the diaminopimelate epimerase family. Homodimer.

Its subcellular location is the cytoplasm. The enzyme catalyses (2S,6S)-2,6-diaminopimelate = meso-2,6-diaminopimelate. It participates in amino-acid biosynthesis; L-lysine biosynthesis via DAP pathway; DL-2,6-diaminopimelate from LL-2,6-diaminopimelate: step 1/1. Functionally, catalyzes the stereoinversion of LL-2,6-diaminopimelate (L,L-DAP) to meso-diaminopimelate (meso-DAP), a precursor of L-lysine and an essential component of the bacterial peptidoglycan. The protein is Diaminopimelate epimerase of Rhodococcus jostii (strain RHA1).